A 565-amino-acid chain; its full sequence is NAD-dependent malic enzyme (565 aa).

Tyrosine 104 serves as the catalytic Proton donor. Arginine 157 contributes to the NAD(+) binding site. The active-site Proton acceptor is lysine 175. Positions 246, 247, and 270 each coordinate a divalent metal cation. NAD(+)-binding residues include aspartate 270 and asparagine 418.

It belongs to the malic enzymes family. Homotetramer. Mg(2+) serves as cofactor. Requires Mn(2+) as cofactor.

It carries out the reaction (S)-malate + NAD(+) = pyruvate + CO2 + NADH. It catalyses the reaction oxaloacetate + H(+) = pyruvate + CO2. The chain is NAD-dependent malic enzyme from Salmonella dublin (strain CT_02021853).